The primary structure comprises 562 residues: Bacillolysin (562 aa).

The N-terminal stretch at 1–24 (MKKKKQALKVLLSVGILSSSFAFA) is a signal peptide. The propeptide at 25-245 (HTSSAAPNNV…KQAAKPAAKP (221 aa)) is activation peptide. Ca(2+) is bound by residues D303, D305, and D384. H388 serves as a coordination point for Zn(2+). Residue E389 is part of the active site. H392 and E412 together coordinate Zn(2+). 8 residues coordinate Ca(2+): E423, N429, D431, E433, E436, Y439, T440, and D446. The active-site Proton donor is H477.

It belongs to the peptidase M4 family. Requires Ca(2+) as cofactor. Zn(2+) serves as cofactor.

It is found in the secreted. It carries out the reaction Similar, but not identical, to that of thermolysin.. In terms of biological role, extracellular zinc metalloprotease. The polypeptide is Bacillolysin (nprM) (Priestia megaterium (strain DSM 319 / IMG 1521) (Bacillus megaterium)).